A 60-amino-acid polypeptide reads, in one-letter code: Small ribosomal subunit protein eS31 (60 aa).

4 residues coordinate Zn(2+): Cys24, Cys27, Cys42, and Cys45. The C4-type zinc-finger motif lies at 24-45 (CPRCGPGVFMADHGNRYACGRC).

It belongs to the eukaryotic ribosomal protein eS31 family. In terms of assembly, part of the 30S ribosomal subunit. Zn(2+) is required as a cofactor.

This chain is Small ribosomal subunit protein eS31, found in Methanopyrus kandleri (strain AV19 / DSM 6324 / JCM 9639 / NBRC 100938).